The following is a 389-amino-acid chain: Nicotinamide-nucleotide adenylyltransferase (389 aa).

The short motif at 380–383 is the Nuclear localization signal element; the sequence is KKQK.

Belongs to the eukaryotic NMN adenylyltransferase family. In terms of tissue distribution, abundantly expressed in neuronal and muscle cells. Present at relatively low levels at the neuromuscular junction. Expressed in the eye; present in photoreceptor cells and various neurons in the lamina cortex and medulla cortex and at low levels in the lamina.

The protein localises to the nucleus. It is found in the cytoplasm. The protein resides in the presynaptic active zone. It carries out the reaction beta-nicotinamide D-ribonucleotide + ATP + H(+) = diphosphate + NAD(+). The enzyme catalyses nicotinate beta-D-ribonucleotide + ATP + H(+) = deamido-NAD(+) + diphosphate. It participates in cofactor biosynthesis; NAD(+) biosynthesis; NAD(+) from nicotinamide D-ribonucleotide: step 1/1. Its pathway is cofactor biosynthesis; NAD(+) biosynthesis; deamido-NAD(+) from nicotinate D-ribonucleotide: step 1/1. Its function is as follows. Catalyzes the formation of NAD(+) from nicotinamide mononucleotide (NMN) and ATP. Essential for viability. Stress-response chaperone protein that prevents toxic aggregation of proteins and promotes proteasome-mediated degradation of misfolded proteins; this is independent of its NAD(+) synthesis activity. Neuroprotective in response to toxic protein aggregation, for example by overexpressed Atx-1/ataxin-1. Required for maintenance and integrity of mature neurons, protecting them from neuronal activity-induced neurodegeneration. Required for the maintenance of axonal and dendritic integrity in both central and peripheral neurons. Chaperone function and neuroprotective roles are largely independent of NAD(+) synthesis activity. Functionally, catalyzes the formation of NAD(+) from nicotinamide mononucleotide (NMN) and ATP. Has, or stimulates, chaperone holdase activity but not refoldase activity. Does not have neuroprotective properties and may stimulate apoptosis and neurodegeneration in response to toxic protein aggregates. In terms of biological role, catalyzes the formation of NAD(+) from nicotinamide mononucleotide (NMN) and ATP. Has, or stimulates, chaperone holdase and refoldase activity. Neuroprotective and reduces the toxic load of protein aggregates, preventing apoptosis and neurodegeneration. Promotes clearance of nuclear misfolded protein aggregates. In Drosophila melanogaster (Fruit fly), this protein is Nicotinamide-nucleotide adenylyltransferase.